Here is a 1041-residue protein sequence, read N- to C-terminus: Protein SMAX1-like (1041 aa).

Residues 8-188 enclose the Clp R domain; sequence IQQTLTPEAA…KSIIEQSLSA (181 aa). 2 repeat regions span residues 12–98 and 117–188; these read LTPE…LDRL and VSNA…SLSA. The segment covering 189-205 has biased composition (low complexity); the sequence is PSPCPSAAASTTTAGPG. Disordered regions lie at residues 189–214, 482–513, and 889–913; these read PSPC…PSPL, EAEQ…QNKA, and EGSH…VKRS. Residues 482–495 are compositionally biased toward basic and acidic residues; the sequence is EAEQTDKPASRPEA. Polar residues predominate over residues 891 to 900; that stretch reads SHNSSDVSVE.

Belongs to the ClpA/ClpB family.

In terms of biological role, may act downstream of MAX2 to negatively regulate karrikins/strigolactone responses. Acts probably specifically in the karrikin pathway. May function in a transcriptional corepressor complex. The polypeptide is Protein SMAX1-like (Oryza sativa subsp. japonica (Rice)).